The following is a 108-amino-acid chain: UPF0145 protein Ava_0420 (108 aa).

The protein belongs to the UPF0145 family.

This is UPF0145 protein Ava_0420 from Trichormus variabilis (strain ATCC 29413 / PCC 7937) (Anabaena variabilis).